Consider the following 1859-residue polypeptide: Protein TIC 214 (1859 aa).

Helical transmembrane passes span 18–38 (IINS…FSIG), 64–84 (FITG…HLAL), 87–107 (PHTI…WNNH), 124–144 (LSIQ…HFIL), 172–192 (VGWL…LFWI), and 221–241 (IFSI…PAPI). The segment at 247-314 (KETSKTEERG…TEEIRVNGKE (68 aa)) is disordered. Over residues 256-268 (GESEEERDVEIET) the composition is skewed to acidic residues. Positions 273 to 284 (KGTKQEQERSTE) are enriched in basic and acidic residues. Residues 295-306 (EKEDPDKIDETE) show a composition bias toward acidic residues.

It belongs to the TIC214 family. In terms of assembly, part of the Tic complex.

Its subcellular location is the plastid. It is found in the chloroplast inner membrane. In terms of biological role, involved in protein precursor import into chloroplasts. May be part of an intermediate translocation complex acting as a protein-conducting channel at the inner envelope. The chain is Protein TIC 214 from Buxus microphylla (Littleleaf boxwood).